Consider the following 85-residue polypeptide: Toxin BmKaTx10 (85 aa).

The N-terminal stretch at 1 to 19 (MNYLVMVSFALLLMTGVES) is a signal peptide. Residues 21 to 83 (RDGYIALPHN…VPIRVPGRCH (63 aa)) enclose the LCN-type CS-alpha/beta domain. 4 disulfides stabilise this stretch: C31–C82, C35–C55, C41–C65, and C45–C67.

Belongs to the long (4 C-C) scorpion toxin superfamily. Sodium channel inhibitor family. Alpha subfamily. As to expression, expressed by the venom gland.

It localises to the secreted. In terms of biological role, alpha toxins bind voltage-independently at site-3 of sodium channels (Nav) and inhibit the inactivation of the activated channels, thereby blocking neuronal transmission. This is Toxin BmKaTx10 from Olivierus martensii (Manchurian scorpion).